We begin with the raw amino-acid sequence, 137 residues long: Photosystem II reaction center W protein, chloroplastic (137 aa).

A chloroplast-targeting transit peptide spans 1-64 (MATITASSSA…ETTTTTNKSM (64 aa)). The transit peptide at 65–83 (GASLLAAAAAATISNPAMA) directs the protein to the thylakoid. Residues 84 to 103 (LVDERMSTEGTGLPFGLSNN) lie on the Lumenal, thylakoid side of the membrane. A helical membrane pass occupies residues 104-123 (LLGWILFGVFGLIWALYFVY). Residues 124–137 (ASGLEEDEESGLSL) lie on the Stromal side of the membrane.

As to quaternary structure, part of the photosystem II complex. PSII is composed of 1 copy each of membrane proteins PsbA, PsbB, PsbC, PsbD, numerous small proteins, at least 3 peripheral proteins of the oxygen-evolving complex and a large number of cofactors. It forms dimeric complexes.

Its subcellular location is the plastid. It is found in the chloroplast thylakoid membrane. Functionally, stabilizes dimeric photosystem II (PSII). In its absence no dimeric PSII accumulates and there is a reduction of monomeric PSII. The chain is Photosystem II reaction center W protein, chloroplastic from Spinacia oleracea (Spinach).